The sequence spans 138 residues: Acid shock protein (138 aa).

An N-terminal signal peptide occupies residues 1–21 (MKKVLALIVAATMGLSSVAFA). A propeptide spanning residues 22–85 (ADAVAPAAAA…TKKAPAQKAQ (64 aa)) is cleaved from the precursor. Low complexity predominate over residues 31-50 (APAATTTAAPAAAATKAPAK). The interval 31–138 (APAATTTAAP…ATKKAAPAAK (108 aa)) is disordered. Basic residues-rich tracts occupy residues 51 to 77 (ATHHKKAHKKAPAQKAQAAKKHHKATK) and 122 to 131 (AAKKHHKATK).

Belongs to the Asr family. Proteolytic processing gives rise to the active protein.

It localises to the periplasm. Functionally, required for growth and/or survival at acidic conditions. The sequence is that of Acid shock protein from Serratia proteamaculans (strain 568).